The chain runs to 201 residues: Recombination protein RecR (201 aa).

Residues 57–74 (CSICGNITATDTDPCVIC) form a C4-type zinc finger. One can recognise a Toprim domain in the interval 82-178 (STVFVVENSR…AVTRLAHGLA (97 aa)).

The protein belongs to the RecR family.

In terms of biological role, may play a role in DNA repair. It seems to be involved in an RecBC-independent recombinational process of DNA repair. It may act with RecF and RecO. This is Recombination protein RecR from Leuconostoc mesenteroides subsp. mesenteroides (strain ATCC 8293 / DSM 20343 / BCRC 11652 / CCM 1803 / JCM 6124 / NCDO 523 / NBRC 100496 / NCIMB 8023 / NCTC 12954 / NRRL B-1118 / 37Y).